Consider the following 493-residue polypeptide: Argininosuccinate lyase (493 aa).

The protein belongs to the lyase 1 family. Argininosuccinate lyase subfamily.

The protein resides in the cytoplasm. The catalysed reaction is 2-(N(omega)-L-arginino)succinate = fumarate + L-arginine. It functions in the pathway amino-acid biosynthesis; L-arginine biosynthesis; L-arginine from L-ornithine and carbamoyl phosphate: step 3/3. The polypeptide is Argininosuccinate lyase (Methanospirillum hungatei JF-1 (strain ATCC 27890 / DSM 864 / NBRC 100397 / JF-1)).